The sequence spans 132 residues: Putative apolipoprotein(a)-like protein 2 (132 aa).

A signal peptide spans 1–21; that stretch reads MEHKEVVLLLLLFLKSAPTET. Residues 27–105 enclose the Kringle domain; the sequence is ECYHSNGQSY…RWEYCNLTRC (79 aa). 3 disulfides stabilise this stretch: C28–C105, C49–C88, and C77–C100. The N-linked (GlcNAc...) asparagine glycan is linked to N101.

As to expression, expressed in liver but not in other tissues tested.

Its subcellular location is the secreted. The chain is Putative apolipoprotein(a)-like protein 2 (LPAL2) from Homo sapiens (Human).